A 115-amino-acid polypeptide reads, in one-letter code: Large ribosomal subunit protein uL22 (115 aa).

It belongs to the universal ribosomal protein uL22 family. Part of the 50S ribosomal subunit.

In terms of biological role, this protein binds specifically to 23S rRNA; its binding is stimulated by other ribosomal proteins, e.g. L4, L17, and L20. It is important during the early stages of 50S assembly. It makes multiple contacts with different domains of the 23S rRNA in the assembled 50S subunit and ribosome. Its function is as follows. The globular domain of the protein is located near the polypeptide exit tunnel on the outside of the subunit, while an extended beta-hairpin is found that lines the wall of the exit tunnel in the center of the 70S ribosome. The chain is Large ribosomal subunit protein uL22 from Lactococcus lactis subsp. lactis (strain IL1403) (Streptococcus lactis).